The chain runs to 400 residues: MTERVVLAYSGGLDTSVAIGWIGAETGAEVIALAVDVGQGGEDLEAIRQRAFTCGAVESIVVDAREEFAASFVAPAIRANALYMDRYPLISSLSRPIIVKHLVEAAKQHGADAISHGCTGKGNDQVRFEVGVMALAPGLRVLAPVRDSGMTRDKAIAFAEERGLPIDVSKKSPYSIDQNLWGRTAECGVLEDPWAQPPEDVFVYTADPTVSRPSDEVTISFTDGLPTGLDGRALSLVDLVAELNTRAGAQGVGRIDMIEDRLVGIKSREIYECPAAITLLTAHRDLEDLTLERDVARFKRGIDQRWGEIVYDGLWFSPLRAALDAFVDSASVGVTGDVRIRLAGGVAQVVGRRSPGSLYDHALATYDAGDQFDQTDARGFIELWGLPTKVWAAREQRLNP.

8–16 serves as a coordination point for ATP; it reads AYSGGLDTS. Positions 87 and 92 each coordinate L-citrulline. Position 117 (G117) interacts with ATP. L-aspartate is bound by residues T119, N123, and D124. Residue N123 participates in L-citrulline binding. L-citrulline is bound by residues R127, S175, E259, and Y271.

This sequence belongs to the argininosuccinate synthase family. Type 1 subfamily. As to quaternary structure, homotetramer.

Its subcellular location is the cytoplasm. The catalysed reaction is L-citrulline + L-aspartate + ATP = 2-(N(omega)-L-arginino)succinate + AMP + diphosphate + H(+). It functions in the pathway amino-acid biosynthesis; L-arginine biosynthesis; L-arginine from L-ornithine and carbamoyl phosphate: step 2/3. This Parafrankia sp. (strain EAN1pec) protein is Argininosuccinate synthase.